Reading from the N-terminus, the 164-residue chain is UPF0225 protein Shewana3_2159 (164 aa).

The protein belongs to the UPF0225 family.

This chain is UPF0225 protein Shewana3_2159, found in Shewanella sp. (strain ANA-3).